We begin with the raw amino-acid sequence, 85 residues long: Large ribosomal subunit protein bL31B (85 aa).

Belongs to the bacterial ribosomal protein bL31 family. Type B subfamily. As to quaternary structure, part of the 50S ribosomal subunit.

This chain is Large ribosomal subunit protein bL31B, found in Serratia proteamaculans (strain 568).